A 137-amino-acid chain; its full sequence is Putative pre-16S rRNA nuclease (137 aa).

Belongs to the YqgF nuclease family.

It localises to the cytoplasm. Functionally, could be a nuclease involved in processing of the 5'-end of pre-16S rRNA. The polypeptide is Putative pre-16S rRNA nuclease (Flavobacterium psychrophilum (strain ATCC 49511 / DSM 21280 / CIP 103535 / JIP02/86)).